We begin with the raw amino-acid sequence, 75 residues long: Metallothionein-like protein 1 (75 aa).

It belongs to the metallothionein superfamily. Type 15 family.

Metallothioneins have a high content of cysteine residues that bind various heavy metals. The sequence is that of Metallothionein-like protein 1 from Cicer arietinum (Chickpea).